The sequence spans 137 residues: Small ribosomal subunit protein uS12 (137 aa).

The tract at residues 1–55 (MPTINQLVRKPRKSKTKQSDSPALNRGFNSKKKQFTNLNSPQKRGVCTRVGTMTP) is disordered. D102 bears the 3-methylthioaspartic acid mark. The tract at residues 118–137 (SGVDGRRQGRSLYGTKKPKN) is disordered.

Belongs to the universal ribosomal protein uS12 family. Part of the 30S ribosomal subunit. Contacts proteins S8 and S17. May interact with IF1 in the 30S initiation complex.

With S4 and S5 plays an important role in translational accuracy. Its function is as follows. Interacts with and stabilizes bases of the 16S rRNA that are involved in tRNA selection in the A site and with the mRNA backbone. Located at the interface of the 30S and 50S subunits, it traverses the body of the 30S subunit contacting proteins on the other side and probably holding the rRNA structure together. The combined cluster of proteins S8, S12 and S17 appears to hold together the shoulder and platform of the 30S subunit. This is Small ribosomal subunit protein uS12 from Staphylococcus epidermidis (strain ATCC 35984 / DSM 28319 / BCRC 17069 / CCUG 31568 / BM 3577 / RP62A).